The primary structure comprises 281 residues: Shikimate dehydrogenase (NADP(+)) (281 aa).

Residues serine 20 to serine 22 and threonine 67 contribute to the shikimate site. Catalysis depends on lysine 71, which acts as the Proton acceptor. An NADP(+)-binding site is contributed by aspartate 83. Residues asparagine 92 and aspartate 108 each coordinate shikimate. Residues glycine 133–alanine 137, asparagine 157–arginine 162, and methionine 225 contribute to the NADP(+) site. A shikimate-binding site is contributed by tyrosine 227. Glycine 248 is a binding site for NADP(+).

The protein belongs to the shikimate dehydrogenase family. As to quaternary structure, homodimer.

The catalysed reaction is shikimate + NADP(+) = 3-dehydroshikimate + NADPH + H(+). Its pathway is metabolic intermediate biosynthesis; chorismate biosynthesis; chorismate from D-erythrose 4-phosphate and phosphoenolpyruvate: step 4/7. Its function is as follows. Involved in the biosynthesis of the chorismate, which leads to the biosynthesis of aromatic amino acids. Catalyzes the reversible NADPH linked reduction of 3-dehydroshikimate (DHSA) to yield shikimate (SA). This is Shikimate dehydrogenase (NADP(+)) from Paracidovorax citrulli (strain AAC00-1) (Acidovorax citrulli).